The following is a 370-amino-acid chain: Anhydro-N-acetylmuramic acid kinase (370 aa).

Residue 13–20 (GTSMDGVD) participates in ATP binding.

This sequence belongs to the anhydro-N-acetylmuramic acid kinase family.

It catalyses the reaction 1,6-anhydro-N-acetyl-beta-muramate + ATP + H2O = N-acetyl-D-muramate 6-phosphate + ADP + H(+). It participates in amino-sugar metabolism; 1,6-anhydro-N-acetylmuramate degradation. It functions in the pathway cell wall biogenesis; peptidoglycan recycling. Functionally, catalyzes the specific phosphorylation of 1,6-anhydro-N-acetylmuramic acid (anhMurNAc) with the simultaneous cleavage of the 1,6-anhydro ring, generating MurNAc-6-P. Is required for the utilization of anhMurNAc either imported from the medium or derived from its own cell wall murein, and thus plays a role in cell wall recycling. The polypeptide is Anhydro-N-acetylmuramic acid kinase (Vibrio parahaemolyticus serotype O3:K6 (strain RIMD 2210633)).